The chain runs to 414 residues: Mu-like prophage FluMu F protein (414 aa).

This sequence to phage Mu protein F.

Functionally, involved in virion morphogenesis. The sequence is that of Mu-like prophage FluMu F protein from Haemophilus influenzae (strain ATCC 51907 / DSM 11121 / KW20 / Rd).